The primary structure comprises 112 residues: Large ribosomal subunit protein eL34A (112 aa).

It belongs to the eukaryotic ribosomal protein eL34 family. In terms of assembly, component of the large ribosomal subunit (LSU). Mature yeast ribosomes consist of a small (40S) and a large (60S) subunit. The 40S small subunit contains 1 molecule of ribosomal RNA (18S rRNA) and at least 33 different proteins. The large 60S subunit contains 3 rRNA molecules (25S, 5.8S and 5S rRNA) and at least 46 different proteins.

It localises to the cytoplasm. Its function is as follows. Component of the ribosome, a large ribonucleoprotein complex responsible for the synthesis of proteins in the cell. The small ribosomal subunit (SSU) binds messenger RNAs (mRNAs) and translates the encoded message by selecting cognate aminoacyl-transfer RNA (tRNA) molecules. The large subunit (LSU) contains the ribosomal catalytic site termed the peptidyl transferase center (PTC), which catalyzes the formation of peptide bonds, thereby polymerizing the amino acids delivered by tRNAs into a polypeptide chain. The nascent polypeptides leave the ribosome through a tunnel in the LSU and interact with protein factors that function in enzymatic processing, targeting, and the membrane insertion of nascent chains at the exit of the ribosomal tunnel. The polypeptide is Large ribosomal subunit protein eL34A (rpl3401) (Schizosaccharomyces pombe (strain 972 / ATCC 24843) (Fission yeast)).